A 448-amino-acid chain; its full sequence is DNA repair protein RadA (448 aa).

A C4-type zinc finger spans residues 10–27 (CSNCGNTSPKWSGQCFDC). 91-98 (GDPGIGKS) lines the ATP pocket. Residues 250–254 (KNRFG) carry the RadA KNRFG motif motif. A lon-protease-like region spans residues 349 to 448 (EVYLSIAGGL…KDLKLLLGSS (100 aa)).

The protein belongs to the RecA family. RadA subfamily.

In terms of biological role, DNA-dependent ATPase involved in processing of recombination intermediates, plays a role in repairing DNA breaks. Stimulates the branch migration of RecA-mediated strand transfer reactions, allowing the 3' invading strand to extend heteroduplex DNA faster. Binds ssDNA in the presence of ADP but not other nucleotides, has ATPase activity that is stimulated by ssDNA and various branched DNA structures, but inhibited by SSB. Does not have RecA's homology-searching function. This Rickettsia bellii (strain RML369-C) protein is DNA repair protein RadA.